A 171-amino-acid chain; its full sequence is uncharacterized protein (171 aa).

This is an uncharacterized protein from Mycobacterium tuberculosis (strain ATCC 25618 / H37Rv).